Consider the following 37-residue polypeptide: Photosystem I reaction center subunit VIII (37 aa).

Residues leucine 7–leucine 27 traverse the membrane as a helical segment.

The protein belongs to the PsaI family.

Its subcellular location is the plastid. The protein resides in the chloroplast thylakoid membrane. Functionally, may help in the organization of the PsaL subunit. This Populus alba (White poplar) protein is Photosystem I reaction center subunit VIII.